Reading from the N-terminus, the 160-residue chain is MATFEGRFTDLGQVRIAVVVARFNDLVTAKLLSGCLDCLSRHGVDTTAESSQLDVAWVPGSFELPLVSQNLARSGLYQVVITLGAVIRGDTPHFDVVVAEASKGIAAVARDTGVPVIFGVLTTDTMQQALERAGIKSNLGWSYGLEALEMASLMKVLPGH.

5-amino-6-(D-ribitylamino)uracil is bound by residues F23, 61–63 (SFE), and 85–87 (AVI). 90-91 (DT) contributes to the (2S)-2-hydroxy-3-oxobutyl phosphate binding site. Residue H93 is the Proton donor of the active site. Residue F118 coordinates 5-amino-6-(D-ribitylamino)uracil. R132 is a (2S)-2-hydroxy-3-oxobutyl phosphate binding site.

It belongs to the DMRL synthase family.

The enzyme catalyses (2S)-2-hydroxy-3-oxobutyl phosphate + 5-amino-6-(D-ribitylamino)uracil = 6,7-dimethyl-8-(1-D-ribityl)lumazine + phosphate + 2 H2O + H(+). The protein operates within cofactor biosynthesis; riboflavin biosynthesis; riboflavin from 2-hydroxy-3-oxobutyl phosphate and 5-amino-6-(D-ribitylamino)uracil: step 1/2. Functionally, catalyzes the formation of 6,7-dimethyl-8-ribityllumazine by condensation of 5-amino-6-(D-ribitylamino)uracil with 3,4-dihydroxy-2-butanone 4-phosphate. This is the penultimate step in the biosynthesis of riboflavin. The chain is 6,7-dimethyl-8-ribityllumazine synthase from Synechococcus sp. (strain CC9311).